The primary structure comprises 244 residues: Phosphoadenosine 5'-phosphosulfate reductase (244 aa).

Cysteine 239 acts as the Nucleophile; cysteine thiosulfonate intermediate in catalysis.

The protein belongs to the PAPS reductase family. CysH subfamily.

It localises to the cytoplasm. The enzyme catalyses [thioredoxin]-disulfide + sulfite + adenosine 3',5'-bisphosphate + 2 H(+) = [thioredoxin]-dithiol + 3'-phosphoadenylyl sulfate. The protein operates within sulfur metabolism; hydrogen sulfide biosynthesis; sulfite from sulfate: step 3/3. In terms of biological role, catalyzes the formation of sulfite from phosphoadenosine 5'-phosphosulfate (PAPS) using thioredoxin as an electron donor. This Escherichia coli O8 (strain IAI1) protein is Phosphoadenosine 5'-phosphosulfate reductase.